The sequence spans 527 residues: Bromodomain-containing protein 9 (527 aa).

The span at 1 to 16 (MNVSVTKRRKKKKKKK) shows a compositional bias: basic residues. Residues 1–54 (MNVSVTKRRKKKKKKKSEKEKDKYLDEDERRRRKEEKKRKREKEQCDSEGETEV) form a disordered region. Residues 17–30 (SEKEKDKYLDEDER) are compositionally biased toward basic and acidic residues. The span at 31–41 (RRRKEEKKRKR) shows a compositional bias: basic residues. Positions 78–182 (NESTPLQQLL…HTGFKMMSKA (105 aa)) constitute a Bromo domain. A histone H4K5ac H4K8ac and histone H4K5bu H4K8bu binding region spans residues 156–158 (TYN). A compositionally biased stretch (basic and acidic residues) spans 468-478 (DFHDVHNDRGG). Residues 468–527 (DFHDVHNDRGGSRPSSSSSMSNNSERDHHLGSPSRISVGEQQDIHDPYEFLQSPETDNQN) form a disordered region. A compositionally biased stretch (low complexity) spans 479-490 (SRPSSSSSMSNN).

In terms of assembly, binds acetylated histones H3 and H4. Binds butyrylated histone H4.

It is found in the nucleus. Plays a role in chromatin remodeling and regulation of transcription. Acts as a chromatin reader that recognizes and binds acylated histones: binds histones that are acetylated and/or butyrylated. In Xenopus laevis (African clawed frog), this protein is Bromodomain-containing protein 9 (brd9).